A 490-amino-acid chain; its full sequence is Protein twist (490 aa).

Disordered regions lie at residues 48–74 (QLQHQQQHLHSHQHHQQHQQQQQQHTQ), 98–167 (PSNE…TGGS), and 330–359 (LDGSDAGGKAFRKPRRRLKRKPSKTEETDE). Residues 54–64 (QHLHSHQHHQQ) show a composition bias toward basic residues. 2 stretches are compositionally biased toward low complexity: residues 65–74 (HQQQQQQHTQ) and 104–135 (STSSNQSAQSTSLEMNNNNTSSNNTSSGNNPS). Over residues 339–351 (AFRKPRRRLKRKP) the composition is skewed to basic residues. The bHLH domain maps to 362-413 (NQRVMANVRERQRTQSLNDAFKSLQQIIPTLPSDKLSKIQTLKLATRYIDFL).

Efficient DNA binding requires dimerization with another bHLH protein. Homodimer.

It localises to the nucleus. In terms of biological role, involved in the establishment and dorsoventral patterning of germ layers in the embryo. This is Protein twist from Drosophila erecta (Fruit fly).